The chain runs to 265 residues: Putative 2-amino-3,7-dideoxy-D-threo-hept-6-ulosonate synthase 2 (265 aa).

Catalysis depends on D27, which acts as the Proton acceptor. Residues 27-31 and 147-149 contribute to the 1-deoxy-D-threo-hexo-2,5-diulose 6-phosphate site; these read DHGVS and YPR. Y147 functions as the Proton donor in the catalytic mechanism. K177 (schiff-base intermediate with substrate) is an active-site residue. Residues 202–203 and 230–231 contribute to the 1-deoxy-D-threo-hexo-2,5-diulose 6-phosphate site; these read GG and GR.

Belongs to the DeoC/FbaB aldolase family. ADHS subfamily. As to quaternary structure, homodecamer.

The catalysed reaction is 1-deoxy-D-threo-hexo-2,5-diulose 6-phosphate + L-aspartate 4-semialdehyde = 2,3-dioxopropyl phosphate + 2-amino-2,3,7-trideoxy-D-lyxo-hept-6-ulosonate. Its function is as follows. Catalyzes a transaldol reaction between 6-deoxy-5-ketofructose 1-phosphate (DKFP) and L-aspartate semialdehyde (ASA) with an elimination of hydroxypyruvaldehyde phosphate to yield 2-amino-3,7-dideoxy-D-threo-hept-6-ulosonate (ADH). Plays a key role in an alternative pathway of the biosynthesis of 3-dehydroquinate (DHQ), which is involved in the canonical pathway for the biosynthesis of aromatic amino acids. The polypeptide is Putative 2-amino-3,7-dideoxy-D-threo-hept-6-ulosonate synthase 2 (Archaeoglobus fulgidus (strain ATCC 49558 / DSM 4304 / JCM 9628 / NBRC 100126 / VC-16)).